Reading from the N-terminus, the 1411-residue chain is Uveal autoantigen with coiled-coil domains and ankyrin repeats (1411 aa).

Met-1 is modified (N-acetylmethionine). Residues 1-30 (MKSLKSRLWKQDAPGPTSPSSPTAVASTQS) are disordered. The span at 13-30 (APGPTSPSSPTAVASTQS) shows a compositional bias: low complexity. 6 ANK repeats span residues 69–98 (EGRSAFHVVASKGNLECLNAILTHGIDVAT), 102–131 (AGRNALHLAAKYGHALCLQKLLQYNCPTEH), 135–164 (QGRTALHDAVMADCPSSIQLLCDHGASVNA), 168–197 (DGRTPLVLATQMCRPTICQLLIDRGADVNS), 201–230 (QNRTALMLGCEYGCRDAVEVLVKNGADLTL), and 234–263 (LGHDSSYYARIGDNLDILNLLKTASENTNK). Residues 263 to 301 (KGRELWRKGPPLQQRNLSHTQDEGSVKSTQREQREPHSF) are disordered. The residue at position 280 (Ser-280) is a Phosphoserine. The segment covering 282 to 301 (TQDEGSVKSTQREQREPHSF) has biased composition (basic and acidic residues). 3 coiled-coil regions span residues 299–379 (HSFQ…NRFK), 442–624 (SENE…LKEL), and 652–1380 (VKRL…AIYR). The interval 1006 to 1031 (GLKEQLSEQTHKCRQRDEEVKKGKQE) is disordered.

In terms of assembly, component of the apoptosome complex, composed of APAF1, pro-caspase-9 and UACA. In the complex, it probably interacts directly with APAF1. Interacts with LGALS3, ARF6 and ACTB. Interacts with RAB39A. In terms of tissue distribution, highly expressed in heart, liver, kidney and testis. Weakly expressed in lung and skeletal muscle. Not expressed in brain and spleen.

Its subcellular location is the nucleus. It is found in the cytoplasm. It localises to the cytoskeleton. Regulates APAF1 expression and plays an important role in the regulation of stress-induced apoptosis. Promotes apoptosis by regulating three pathways, apoptosome up-regulation, LGALS3/galectin-3 down-regulation and NF-kappa-B inactivation. Regulates the redistribution of APAF1 into the nucleus after proapoptotic stress. Down-regulates the expression of LGALS3 by inhibiting NFKB1. In terms of biological role, modulates isoactin dynamics to regulate the morphological alterations required for cell growth and motility. Interaction with ARF6 may modulate cell shape and motility after injury. May be involved in multiple neurite formation. The polypeptide is Uveal autoantigen with coiled-coil domains and ankyrin repeats (Uaca) (Mus musculus (Mouse)).